Consider the following 168-residue polypeptide: uncharacterized protein (168 aa).

The next 5 helical transmembrane spans lie at 15 to 33, 41 to 57, 73 to 93, 108 to 128, and 129 to 149; these read YLTV…LAVL, LSLT…ASSL, WIGL…GALL, VPLL…WVLN, and NLIA…VLAI.

Its subcellular location is the cell membrane. This is an uncharacterized protein from Haemophilus influenzae (strain ATCC 51907 / DSM 11121 / KW20 / Rd).